A 413-amino-acid polypeptide reads, in one-letter code: uncharacterized protein (413 aa).

The protein belongs to the mycobacterial PPE family.

This is an uncharacterized protein from Mycobacterium tuberculosis (strain CDC 1551 / Oshkosh).